The chain runs to 344 residues: Protein BIM1 (344 aa).

Ser2 is modified (N-acetylserine). Residues 6–107 enclose the Calponin-homology (CH) domain; that stretch reads GESRTELLTW…FLQWLKKHWI (102 aa). A disordered region spans residues 126–173; sequence IITNNSATKPRTVSNPTTAKRSSSTGTGSAMSGGLATRHSSLGINGSR. Positions 127 to 146 are enriched in polar residues; that stretch reads ITNNSATKPRTVSNPTTAKR. The segment covering 147–159 has biased composition (low complexity); that stretch reads SSSTGTGSAMSGG. A Phosphoserine modification is found at Ser157. The span at 163–173 shows a compositional bias: polar residues; the sequence is RHSSLGINGSR. The 94-residue stretch at 188-281 folds into the EB1 C-terminal domain; sequence ELTKSQETIG…LYATAEGFEM (94 aa). The interval 292–312 is disordered; it reads NLGEHGTVPNQGGYANSNGEV.

Belongs to the MAPRE family.

The protein localises to the cytoplasm. Its subcellular location is the cytoskeleton. In terms of biological role, binds microtubules. The polypeptide is Protein BIM1 (BIM1) (Saccharomyces cerevisiae (strain ATCC 204508 / S288c) (Baker's yeast)).